Consider the following 386-residue polypeptide: ATP synthase subunit a (386 aa).

4 helical membrane passes run F150 to V170, H243 to F263, F270 to L290, and M310 to L330.

Belongs to the ATPase A chain family. F-type ATPases have 2 components, CF(1) - the catalytic core - and CF(0) - the membrane proton channel. CF(1) has five subunits: alpha(3), beta(3), gamma(1), delta(1), epsilon(1). CF(0) has three main subunits: a, b and c.

The protein localises to the mitochondrion inner membrane. In terms of biological role, mitochondrial membrane ATP synthase (F(1)F(0) ATP synthase or Complex V) produces ATP from ADP in the presence of a proton gradient across the membrane which is generated by electron transport complexes of the respiratory chain. F-type ATPases consist of two structural domains, F(1) - containing the extramembraneous catalytic core and F(0) - containing the membrane proton channel, linked together by a central stalk and a peripheral stalk. During catalysis, ATP synthesis in the catalytic domain of F(1) is coupled via a rotary mechanism of the central stalk subunits to proton translocation. Key component of the proton channel; it may play a direct role in the translocation of protons across the membrane. The sequence is that of ATP synthase subunit a (ATP6) from Triticum aestivum (Wheat).